The following is a 444-amino-acid chain: MGKGGNQGEGSTELQAPMPTFRWEEIQKHNLRTDRWLVIDRKVYNVTKWSQRHPGGHRVIGHYSGEDATDAFRAFHLDLDFVGKFLKPLLIGELAPEEPSLDRGKSSQITEDFRALKKTAEDMNLFKTNHLFFFLLLSHIIVMESIAWFILSYFGNGWIPTVITAFVLATSQAQAGWLQHDYGHLSVYKKSIWNHIVHKFVIGHLKGASANWWNHRHFQHHAKPNIFHKDPDIKSLHVFVLGEWQPLEYGKKKLKYLPYNHQHEYFFLIGPPLLIPMYFQYQIIMTMIRRRDWVDLAWAISYYARFFYTYIPFYGILGALVFLNFIRFLESHWFVWVTQMNHIVMEIDLDHYRDWFSSQLAATCNVEQSFFNDWFSGHLNFQIEHHLFPTMPRHNLHKIAPLVKSLCAKHGIEYQEKPLLRALLDIVSSLKKSGELWLDAYLHK.

The Cytoplasmic segment spans residues 1–130; the sequence is MGKGGNQGEG…EDMNLFKTNH (130 aa). The Cytochrome b5 heme-binding domain maps to 18 to 95; that stretch reads MPTFRWEEIQ…LKPLLIGELA (78 aa). Residues 131-151 traverse the membrane as a helical segment; the sequence is LFFFLLLSHIIVMESIAWFIL. At 152–157 the chain is on the lumenal side; it reads SYFGNG. A helical transmembrane segment spans residues 158-178; the sequence is WIPTVITAFVLATSQAQAGWL. The Cytoplasmic segment spans residues 179 to 264; it reads QHDYGHLSVY…KYLPYNHQHE (86 aa). Positions 180–184 match the Histidine box-1 motif; sequence HDYGH. The short motif at 217–221 is the Histidine box-2 element; that stretch reads HFQHH. Residues 265–285 form a helical membrane-spanning segment; it reads YFFLIGPPLLIPMYFQYQIIM. Over 286–305 the chain is Lumenal; sequence TMIRRRDWVDLAWAISYYAR. The helical transmembrane segment at 306-326 threads the bilayer; that stretch reads FFYTYIPFYGILGALVFLNFI. At 327–444 the chain is on the cytoplasmic side; sequence RFLESHWFVW…ELWLDAYLHK (118 aa). A Histidine box-3 motif is present at residues 382–386; it reads QIEHH.

The protein belongs to the fatty acid desaturase type 1 family. In terms of tissue distribution, expressed in the liver and brain (at protein level). Highest activity is found in the liver and adrenals followed by the testes and other organs, absent in adipose tissue.

It is found in the endoplasmic reticulum membrane. Its subcellular location is the microsome membrane. The enzyme catalyses (9Z,12Z)-octadecadienoyl-CoA + 2 Fe(II)-[cytochrome b5] + O2 + 2 H(+) = (6Z,9Z,12Z)-octadecatrienoyl-CoA + 2 Fe(III)-[cytochrome b5] + 2 H2O. It catalyses the reaction (9Z,12Z,15Z)-octadecatrienoyl-CoA + 2 Fe(II)-[cytochrome b5] + O2 + 2 H(+) = (6Z,9Z,12Z,15Z)-octadecatetraenoyl-CoA + 2 Fe(III)-[cytochrome b5] + 2 H2O. The catalysed reaction is (9Z,12Z,15Z,18Z,21Z)-tetracosapentaenoyl-CoA + 2 Fe(II)-[cytochrome b5] + O2 + 2 H(+) = (6Z,9Z,12Z,15Z,18Z,21Z)-tetracosahexaenoyl-CoA + 2 Fe(III)-[cytochrome b5] + 2 H2O. It carries out the reaction (11E)-octadecenoyl-CoA + 2 Fe(II)-[cytochrome b5] + O2 + 2 H(+) = (6Z,11E)-octadecadienoyl-CoA + 2 Fe(III)-[cytochrome b5] + 2 H2O. The enzyme catalyses (11Z,14Z)-eicosadienoyl-CoA + 2 Fe(II)-[cytochrome b5] + O2 + 2 H(+) = (8Z,11Z,14Z)-eicosatrienoyl-CoA + 2 Fe(III)-[cytochrome b5] + 2 H2O. It catalyses the reaction (11Z,14Z,17Z)-eicosatrienoyl-CoA + 2 Fe(II)-[cytochrome b5] + O2 + 2 H(+) = (8Z,11Z,14Z,17Z)-eicosatetraenoyl-CoA + 2 Fe(III)-[cytochrome b5] + 2 H2O. It participates in lipid metabolism; polyunsaturated fatty acid biosynthesis. Functionally, involved in the biosynthesis of highly unsaturated fatty acids (HUFA) from the essential polyunsaturated fatty acids (PUFA) linoleic acid (LA) (18:2n-6) and alpha-linolenic acid (ALA) (18:3n-3) precursors, acting as a fatty acyl-coenzyme A (CoA) desaturase that introduces a cis double bond at carbon 6 of the fatty acyl chain. Catalyzes the first and rate limiting step in this pathway which is the desaturation of LA (18:2n-6) and ALA (18:3n-3) into gamma-linoleate (GLA) (18:3n-6) and stearidonate (18:4n-3), respectively. Subsequently, in the biosynthetic pathway of HUFA n-3 series, it desaturates tetracosapentaenoate (24:5n-3) to tetracosahexaenoate (24:6n-3), which is then converted to docosahexaenoate (DHA)(22:6n-3), an important lipid for nervous system function. It can also desaturate (11E)-octadecenoate (trans-vaccenoate) at carbon 6 generating (6Z,11E)-octadecadienoate. In addition to Delta-6 activity, this enzyme exhibits Delta-8 activity with slight biases toward n-3 fatty acyl-CoA substrates. The protein is Acyl-CoA 6-desaturase (Fads2) of Rattus norvegicus (Rat).